We begin with the raw amino-acid sequence, 775 residues long: Acetamidase regulatory protein (775 aa).

A compositionally biased stretch (polar residues) spans 1-15 (MSSTAHNSQPSTGNG). A disordered region spans residues 1–20 (MSSTAHNSQPSTGNGVTKRK). The zn(2)-C6 fungal-type DNA-binding region spans 26 to 59 (CIHCHRRKVRCDARIVGLPCSNCRSAGKADCRIH). Polar residues predominate over residues 126-153 (PHSSYTNGNHLSNNRGSQPITETQTFTR). Disordered regions lie at residues 126–159 (PHSSYTNGNHLSNNRGSQPITETQTFTRQPGADR) and 630–699 (ATSE…HQNQ). Basic and acidic residues predominate over residues 630–644 (ATSERPRRFSTHDQN). Residues 674–689 (PRPPYEVPTPESPRMP) are compositionally biased toward pro residues.

The protein localises to the nucleus. Its function is as follows. Positively regulates the expression of genes involved in the catabolism of certain amides, omega amino acids, and lactams. The polypeptide is Acetamidase regulatory protein (amdR) (Aspergillus oryzae (strain ATCC 42149 / RIB 40) (Yellow koji mold)).